The primary structure comprises 548 residues: Chaperonin GroEL 2 (548 aa).

ATP contacts are provided by residues Thr-29–Pro-32, Asp-86–Thr-90, Gly-418, Asn-482–Ala-484, and Asp-498.

It belongs to the chaperonin (HSP60) family. As to quaternary structure, forms a cylinder of 14 subunits composed of two heptameric rings stacked back-to-back. Interacts with the co-chaperonin GroES.

It is found in the cytoplasm. It catalyses the reaction ATP + H2O + a folded polypeptide = ADP + phosphate + an unfolded polypeptide.. Functionally, together with its co-chaperonin GroES, plays an essential role in assisting protein folding. The GroEL-GroES system forms a nano-cage that allows encapsulation of the non-native substrate proteins and provides a physical environment optimized to promote and accelerate protein folding. The chain is Chaperonin GroEL 2 from Corynebacterium glutamicum (strain ATCC 13032 / DSM 20300 / JCM 1318 / BCRC 11384 / CCUG 27702 / LMG 3730 / NBRC 12168 / NCIMB 10025 / NRRL B-2784 / 534).